Here is an 889-residue protein sequence, read N- to C-terminus: Rho GTPase-activating protein 27 (889 aa).

An SH3 domain is found at 6–69; that stretch reads VGDVYVLVEH…PAQYVRELPA (64 aa). Residues 104 to 132 are disordered; the sequence is AGPDGAPEESGGRASSLCGPAQRGAATQR. Phosphoserine is present on residues S156, S216, and S249. WW domains lie at 246 to 280 and 299 to 333; these read PLPS…SPFE and VSLE…DEAE. The segment covering 329–341 has biased composition (acidic residues); that stretch reads EDEAENEPEEELE. Residues 329-397 are disordered; the sequence is EDEAENEPEE…SPLTTPPGWS (69 aa). Residue S347 is modified to Phosphoserine. Residues 383–395 are compositionally biased toward low complexity; it reads EPGPTSPLTTPPG. The 34-residue stretch at 411-444 folds into the WW 3 domain; it reads HFTQEQWVRLEDPHGKPYFYNPEDSSVRWELPQV. The segment at 447–474 is disordered; the sequence is PAPRSIHKSSQDGDTPAQASPPEEKVPA. Position 456 is a phosphoserine (S456). T461 bears the Phosphothreonine mark. Residue S466 is modified to Phosphoserine. The PH domain maps to 496–612; it reads TLDKAGVLHR…WHKAIAQGIQ (117 aa). The segment at 617-655 is disordered; the sequence is ELPPEESESSRVDFGSSERLGSWQEKEEDARPNAAAPAL. Positions 697-886 constitute a Rho-GAP domain; sequence CALAALCERE…LILQQCADIF (190 aa).

In terms of assembly, interacts with SH3KBP1/CIN85. Expressed in germinal center B-cell, spleen, chronic lymphocytic leukemia, pancreatic cancer and lung cancer.

It localises to the cytoplasm. The protein localises to the membrane. Functionally, rho GTPase-activating protein which may be involved in clathrin-mediated endocytosis. GTPase activators for the Rho-type GTPases act by converting them to an inactive GDP-bound state. Has activity toward CDC42 and RAC1. This chain is Rho GTPase-activating protein 27, found in Homo sapiens (Human).